The primary structure comprises 284 residues: RNA polymerase sigma factor RpoH (284 aa).

The tract at residues methionine 54 to arginine 123 is sigma-70 factor domain-2. The Interaction with polymerase core subunit RpoC signature appears at aspartate 78 to glutamine 81. A sigma-70 factor domain-4 region spans residues alanine 229–glycine 280. Residues leucine 253–lysine 272 constitute a DNA-binding region (H-T-H motif).

This sequence belongs to the sigma-70 factor family. RpoH subfamily. Interacts with the RNA polymerase core enzyme.

The protein localises to the cytoplasm. Its function is as follows. Sigma factors are initiation factors that promote the attachment of RNA polymerase to specific initiation sites and are then released. This sigma factor is involved in regulation of expression of heat shock genes. This Pseudomonas aeruginosa (strain ATCC 15692 / DSM 22644 / CIP 104116 / JCM 14847 / LMG 12228 / 1C / PRS 101 / PAO1) protein is RNA polymerase sigma factor RpoH.